The chain runs to 983 residues: Isoleucine--tRNA ligase (983 aa).

The 'HIGH' region motif lies at 61–71 (PYANGELHVGH). Glutamate 608 contacts L-isoleucyl-5'-AMP. The short motif at 649 to 653 (KMSKS) is the 'KMSKS' region element. Lysine 652 is a binding site for ATP. Positions 952, 955, 972, and 975 each coordinate Zn(2+).

It belongs to the class-I aminoacyl-tRNA synthetase family. IleS type 1 subfamily. Monomer. Zn(2+) serves as cofactor.

The protein localises to the cytoplasm. The catalysed reaction is tRNA(Ile) + L-isoleucine + ATP = L-isoleucyl-tRNA(Ile) + AMP + diphosphate. In terms of biological role, catalyzes the attachment of isoleucine to tRNA(Ile). As IleRS can inadvertently accommodate and process structurally similar amino acids such as valine, to avoid such errors it has two additional distinct tRNA(Ile)-dependent editing activities. One activity is designated as 'pretransfer' editing and involves the hydrolysis of activated Val-AMP. The other activity is designated 'posttransfer' editing and involves deacylation of mischarged Val-tRNA(Ile). The polypeptide is Isoleucine--tRNA ligase (Gloeobacter violaceus (strain ATCC 29082 / PCC 7421)).